The following is a 502-amino-acid chain: Histidine--tRNA ligase (502 aa).

It belongs to the class-II aminoacyl-tRNA synthetase family. Homodimer.

The protein localises to the cytoplasm. It carries out the reaction tRNA(His) + L-histidine + ATP = L-histidyl-tRNA(His) + AMP + diphosphate + H(+). The polypeptide is Histidine--tRNA ligase (Brucella ovis (strain ATCC 25840 / 63/290 / NCTC 10512)).